Here is a 385-residue protein sequence, read N- to C-terminus: Methionine aminopeptidase 1 (385 aa).

Residues 6–59 form a C6H2-type zinc finger; that stretch reads TRVCETAGCSSEAKLQCPTCLKLGIQGSYFCSQECFKGSWATHKLLHKKAKDEK. Residues cysteine 9, cysteine 14, cysteine 22, cysteine 25, cysteine 36, cysteine 40, histidine 48, and histidine 52 each contribute to the Zn(2+) site. Position 203 (histidine 203) interacts with a protein. Aspartate 220, aspartate 231, and histidine 294 together coordinate Zn(2+). Histidine 301 contacts a protein. 2 residues coordinate Zn(2+): glutamate 327 and glutamate 358.

Belongs to the peptidase M24A family. Methionine aminopeptidase type 1 subfamily. As to quaternary structure, associates with the 60S ribosomal subunit of the 80S translational complex. The cofactor is Zn(2+). Co(2+) serves as cofactor. Mn(2+) is required as a cofactor. It depends on Fe(2+) as a cofactor.

It localises to the cytoplasm. It carries out the reaction Release of N-terminal amino acids, preferentially methionine, from peptides and arylamides.. Its function is as follows. Cotranslationally removes the N-terminal methionine from nascent proteins. The N-terminal methionine is often cleaved when the second residue in the primary sequence is small and uncharged (Met-Ala-, Cys, Gly, Pro, Ser, Thr, or Val). The chain is Methionine aminopeptidase 1 (METAP1) from Gallus gallus (Chicken).